The following is a 660-amino-acid chain: Polyadenylate-binding protein 3 (660 aa).

RRM domains are found at residues 49–126 (SSLY…LSNR), 136–213 (GNIF…HFIR), 229–306 (TNVY…RAQK), and 332–409 (ANLY…LAQR). One can recognise a PABC domain in the interval 571-648 (PISKLTSSLA…ALDVLRLSVD (78 aa)).

Belongs to the polyadenylate-binding protein type-1 family. Expressed predominantly in immature flowers. Detected in tapetum and pollen. Strongly expressed in immatures siliques.

It localises to the cytoplasm. The protein localises to the nucleus. Functionally, binds the poly(A) tail of mRNA. Appears to be an important mediator of the multiple roles of the poly(A) tail in mRNA biogenesis, stability and translation. In the cytoplasm, affects both translation and mRNA decay. Inhibits the polyadenylated RNA degradation by the Rrp41p 3'--&gt;5' exonuclease in vitro. Binds with the 5'UTRs of PAB2, PAB3 and with a lower affinity with the 5'UTR of PAB5. In Arabidopsis thaliana (Mouse-ear cress), this protein is Polyadenylate-binding protein 3 (PAB3).